The sequence spans 931 residues: Short transient receptor potential channel 6 (931 aa).

The interval 1–24 (MNQSPAAFGPRRGGSPAVVAGAGA) is disordered. The Cytoplasmic segment spans residues 1-406 (MNQSPAAFGP…GLRQQTMAVK (406 aa)). A compositionally biased stretch (low complexity) spans 13–24 (GGSPAVVAGAGA). 3 ANK repeats span residues 131–160 (MGQN…LSRV), 162–188 (DALL…FAEG), and 217–246 (HDVT…RIER). Residues 407 to 427 (FLVVLAVAVGLPFLALVYWFA) form a helical membrane-spanning segment. Residues 428 to 438 (PCSKMGKIMRG) are Extracellular-facing. The helical transmembrane segment at 439–459 (PFMKFVAHAASFTIFLGLLVM) threads the bilayer. Residues 460-487 (NAADRFEGTKILPNETSTDHAKQLFRMK) are Cytoplasmic-facing. The helical transmembrane segment at 488-508 (TSCFSWMEMLIISWVIGMIWA) threads the bilayer. The Extracellular segment spans residues 509-521 (ECKEIWTQGPKEY). Residues 522 to 542 (LFELWNMLDFGMLAIFAASFI) traverse the membrane as a helical segment. At 543 to 592 (ARFMAFWHASKAQSIIDANDTLKDLTKVTLGDNVKYYNLARIKWDPSDPQ) the chain is on the cytoplasmic side. Residues 593-613 (IISEGLYAIAVVLSFSRIAYI) traverse the membrane as a helical segment. At 614-636 (LPANESFGPLQISLGRTVKDIFK) the chain is on the extracellular side. Residue Asn617 is glycosylated (N-linked (GlcNAc...) asparagine). Residues 618–647 (ESFGPLQISLGRTVKDIFKFMVIFIMVFVA) form an ANK 4 repeat. The helical transmembrane segment at 637–657 (FMVIFIMVFVAFMIGMFNLYS) threads the bilayer. Residues 658 to 674 (YYIGAKQNEAFTTVEES) lie on the Cytoplasmic side of the membrane. A helical transmembrane segment spans residues 675–695 (FKTLFWAIFGLSEVKSVVINY). Over 696-706 (NHKFIENIGYV) the chain is Extracellular. The chain crosses the membrane as a helical span at residues 707–727 (LYGVYNVTMVIVLLNMLIAMI). The Cytoplasmic portion of the chain corresponds to 728 to 931 (NSSFQEIEDD…MEPNQEESNR (204 aa)). Residue Ser815 is modified to Phosphoserine.

Belongs to the transient receptor (TC 1.A.4) family. STrpC subfamily. TRPC6 sub-subfamily. In terms of assembly, homodimer; forms channel complex. Interacts with MX1 and RNF24. Post-translationally, phosphorylated by FYN, leading to an increase of TRPC6 channel activity.

The protein localises to the cell membrane. It carries out the reaction Ca(2+)(in) = Ca(2+)(out). Its function is as follows. Thought to form a receptor-activated non-selective calcium permeant cation channel. Probably is operated by a phosphatidylinositol second messenger system activated by receptor tyrosine kinases or G-protein coupled receptors. Activated by diacylglycerol (DAG) in a membrane-delimited fashion, independently of protein kinase C. Seems not to be activated by intracellular calcium store depletion. The sequence is that of Short transient receptor potential channel 6 from Bos taurus (Bovine).